The chain runs to 446 residues: Sensor-type histidine kinase PrrB (446 aa).

The next 2 helical transmembrane spans lie at 19 to 39 and 151 to 171; these read VVATAIGAAIPVLIVGTVVWV and LLICGFAIAAAAVFAWLLAAF. Residues 172-222 enclose the HAMP domain; sequence AVRPFKQLAQQTRSVDAGGEAPRVEVHGATEAVEIAEAMRGMLQRIWNEQN. The 210-residue stretch at 237–446 folds into the Histidine kinase domain; sequence VSSHELRTPL…RLLLRISAPS (210 aa). Phosphohistidine; by autocatalysis is present on His-240.

Post-translationally, autophosphorylated.

The protein localises to the cell membrane. It carries out the reaction ATP + protein L-histidine = ADP + protein N-phospho-L-histidine.. Its function is as follows. Member of the two-component regulatory system PrrB/PrrA that is involved specifically in early intracellular multiplication of Mycobacterium and is essential for its viability. Functions as a sensor protein kinase which is autophosphorylated at a histidine residue and transfers its phosphate group to the conserved aspartic acid residue in the regulatory domain of PrrA. In turn, PrrA binds to the upstream promoter regions of target genes including itself to positively regulate their expression. This is Sensor-type histidine kinase PrrB (prrB) from Mycobacterium leprae (strain TN).